Consider the following 179-residue polypeptide: MARFQEFYKEKVVPGLIEKFGYKSVMEVPRITKITLNMGLGEAVADKKIIENAVGDLTKIAGQKPVVTKARKAIAGFKIRQGYPIGAMVTLRGRAMYEFLDRFVTVALPRVRDFRGVSGRAFDGRGNYNIGVKEQIIFPEIDYDKIDALRGLNISITTTAKTDDEAKALLASFKFPFRN.

Belongs to the universal ribosomal protein uL5 family. In terms of assembly, part of the 50S ribosomal subunit; part of the 5S rRNA/L5/L18/L25 subcomplex. Contacts the 5S rRNA and the P site tRNA. Forms a bridge to the 30S subunit in the 70S ribosome.

This is one of the proteins that bind and probably mediate the attachment of the 5S RNA into the large ribosomal subunit, where it forms part of the central protuberance. In the 70S ribosome it contacts protein S13 of the 30S subunit (bridge B1b), connecting the 2 subunits; this bridge is implicated in subunit movement. Contacts the P site tRNA; the 5S rRNA and some of its associated proteins might help stabilize positioning of ribosome-bound tRNAs. The protein is Large ribosomal subunit protein uL5 of Burkholderia mallei (strain NCTC 10247).